The sequence spans 2431 residues: Histone-lysine N-methyltransferase trr (2431 aa).

Disordered stretches follow at residues Leu34–Pro78, Asp135–Gly201, Ala213–Pro235, and Gln759–Asn789. Polar residues predominate over residues Tyr142 to Phe165. 3 stretches are compositionally biased toward low complexity: residues Ala171 to Ser183, Ser218 to Pro235, and Ala767 to Pro787. Positions Leu801–Leu805 match the LXXLL motif 1 motif. Disordered regions lie at residues Pro863–Ser895, Val918–Gln973, His1226–Ala1292, Thr1404–Ser1433, and Gly1478–Met1500. 3 stretches are compositionally biased toward low complexity: residues Thr866–Ser895, Gln952–Gln970, and His1226–Asn1241. Over residues Arg1269–Arg1281 the composition is skewed to basic residues. Residues Pro1410–Ser1422 show a composition bias toward low complexity. The segment covering Ser1423–Ser1433 has biased composition (gly residues). Position 1486 is a phosphothreonine (Thr1486). A phosphoserine mark is found at Ser1488 and Ser1490. Residues Leu1652–Leu1656 carry the LXXLL motif 2 motif. The segment at Gly1790–Thr1836 is disordered. The span at Val1794 to Ala1811 shows a compositional bias: polar residues. The segment at Thr1895 to Val1935 adopts a C2HC pre-PHD-type zinc-finger fold. The PHD-type zinc finger occupies Gln1956–Gly2003. Positions Leu2060 to Leu2064 match the LXXLL motif 3 motif. One can recognise an FYR N-terminal domain in the interval Ser2061–Ala2121. The region spanning Gly2122–Tyr2209 is the FYR C-terminal domain. The SET domain occupies Asn2291–Lys2407. In terms of domain architecture, Post-SET spans His2415–Asn2431.

Belongs to the class V-like SAM-binding methyltransferase superfamily. Histone-lysine methyltransferase family. TRX/MLL subfamily. As to quaternary structure, component of the MLL3/4 complex composed at least of the catalytic subunit trr, ash2, Rbbp5, Dpy-30L1, wds, hcf, ptip, Pa1, Utx, Lpt and Ncoa6. Interacts with nuclear receptor EcR in an ecdysone-dependent manner. Interacts with ash2; the interaction stabilizes trr. As to expression, widely expressed.

It localises to the nucleus. The protein resides in the chromosome. The catalysed reaction is L-lysyl(4)-[histone H3] + 3 S-adenosyl-L-methionine = N(6),N(6),N(6)-trimethyl-L-lysyl(4)-[histone H3] + 3 S-adenosyl-L-homocysteine + 3 H(+). Its function is as follows. Histone methyltransferase that acts as a coactivator for the ecdysone receptor during development. Specifically trimethylates 'Lys-4' of histone H3, a specific tag for epigenetic transcriptional activation. Recruited by EcR in an ecdysone-dependent manner causing H3 'Lys-4' trimethylation at ecdysone-inducible promoters, leading to activate expression. Plays a central role in the developing compound eye, during the progression of the morphogenetic furrow and in post-furrow differentiation of the retinal epithelium, notably by activating expression of hh. Also required for wing and abdominal development. This Drosophila melanogaster (Fruit fly) protein is Histone-lysine N-methyltransferase trr (trr).